Consider the following 370-residue polypeptide: Biotin synthase (370 aa).

One can recognise a Radical SAM core domain in the interval 79 to 314; the sequence is CCGNVVDLCS…KQIIRYAGGR (236 aa). [4Fe-4S] cluster contacts are provided by Cys97, Cys101, and Cys104. Residues Cys142, Cys179, Cys239, and Arg309 each contribute to the [2Fe-2S] cluster site.

Belongs to the radical SAM superfamily. Biotin synthase family. As to quaternary structure, homodimer. The cofactor is [4Fe-4S] cluster. It depends on [2Fe-2S] cluster as a cofactor.

The catalysed reaction is (4R,5S)-dethiobiotin + (sulfur carrier)-SH + 2 reduced [2Fe-2S]-[ferredoxin] + 2 S-adenosyl-L-methionine = (sulfur carrier)-H + biotin + 2 5'-deoxyadenosine + 2 L-methionine + 2 oxidized [2Fe-2S]-[ferredoxin]. It participates in cofactor biosynthesis; biotin biosynthesis; biotin from 7,8-diaminononanoate: step 2/2. Functionally, catalyzes the conversion of dethiobiotin (DTB) to biotin by the insertion of a sulfur atom into dethiobiotin via a radical-based mechanism. This Trichodesmium erythraeum (strain IMS101) protein is Biotin synthase.